The primary structure comprises 246 residues: DNA polymerase sliding clamp (246 aa).

It belongs to the PCNA family. Homotrimer. The subunits circularize to form a toroid; DNA passes through its center. Replication factor C (RFC) is required to load the toroid on the DNA.

In terms of biological role, sliding clamp subunit that acts as a moving platform for DNA processing. Responsible for tethering the catalytic subunit of DNA polymerase and other proteins to DNA during high-speed replication. The chain is DNA polymerase sliding clamp from Methanocella arvoryzae (strain DSM 22066 / NBRC 105507 / MRE50).